Reading from the N-terminus, the 453-residue chain is Pup--protein ligase (453 aa).

Position 9 (Glu-9) interacts with Mg(2+). An ATP-binding site is contributed by Arg-53. Mg(2+) is bound at residue Tyr-55. Asp-57 functions as the Proton acceptor in the catalytic mechanism. Glu-63 contacts Mg(2+). Residues Thr-66 and Trp-420 each coordinate ATP.

Belongs to the Pup ligase/Pup deamidase family. Pup-conjugating enzyme subfamily.

It catalyses the reaction ATP + [prokaryotic ubiquitin-like protein]-L-glutamate + [protein]-L-lysine = ADP + phosphate + N(6)-([prokaryotic ubiquitin-like protein]-gamma-L-glutamyl)-[protein]-L-lysine.. The protein operates within protein degradation; proteasomal Pup-dependent pathway. It functions in the pathway protein modification; protein pupylation. Catalyzes the covalent attachment of the prokaryotic ubiquitin-like protein modifier Pup to the proteasomal substrate proteins, thereby targeting them for proteasomal degradation. This tagging system is termed pupylation. The ligation reaction involves the side-chain carboxylate of the C-terminal glutamate of Pup and the side-chain amino group of a substrate lysine. The polypeptide is Pup--protein ligase (Streptomyces coelicolor (strain ATCC BAA-471 / A3(2) / M145)).